A 416-amino-acid chain; its full sequence is Keratin, type I cuticular Ha1 (416 aa).

Residues 1–56 (MPYNFCLPSLSCRTSCSSRPCVPPSCHSCTLPGACNIPANVSNCNWFCEGSFNGSE) form a head region. Positions 56–367 (EKETMQFLND…SLLESEDCNL (312 aa)) constitute an IF rod domain. Residues 57–91 (KETMQFLNDRLASYLEKVRQLERDNAELENLIRER) form a coil 1A region. Positions 92–102 (SQQQEPLLCPS) are linker 1. The segment at 103 to 203 (YQSYFKTIEE…HEQEVNTLRC (101 aa)) is coil 1B. The tract at residues 204–219 (QLGDRLNVEVDAAPTV) is linker 12. The segment at 220-363 (DLNRVLNETR…NTYRSLLESE (144 aa)) is coil 2. The interval 364-416 (DCNLPSNPCATTNACSKPIGPCLSNPCTSCVPPAPCTPCAPRPRCGPCNSFVR) is tail.

The protein belongs to the intermediate filament family. In terms of tissue distribution, present in scalp but not in hairless skin. Abundantly expressed in the differentiating cortex of growing (anagen) hair. Expression is restricted to the keratinocytes of the hair cortex and is absent from inner root sheath and medulla.

The chain is Keratin, type I cuticular Ha1 (KRT31) from Homo sapiens (Human).